The following is a 111-amino-acid chain: Large ribosomal subunit protein uL22 (111 aa).

This sequence belongs to the universal ribosomal protein uL22 family. As to quaternary structure, part of the 50S ribosomal subunit.

In terms of biological role, this protein binds specifically to 23S rRNA; its binding is stimulated by other ribosomal proteins, e.g. L4, L17, and L20. It is important during the early stages of 50S assembly. It makes multiple contacts with different domains of the 23S rRNA in the assembled 50S subunit and ribosome. Its function is as follows. The globular domain of the protein is located near the polypeptide exit tunnel on the outside of the subunit, while an extended beta-hairpin is found that lines the wall of the exit tunnel in the center of the 70S ribosome. In Pelobacter propionicus (strain DSM 2379 / NBRC 103807 / OttBd1), this protein is Large ribosomal subunit protein uL22.